The chain runs to 1423 residues: MGKAMLKLCITLMVLVFSGTAESKGVMRREDESFPHLKSRLCGGLNGLGEDAYRSHCVVYYTKRMGVVSLDHVEELANHCLRIVKQCCAEGAADDCLQTELAAVQEQVCTRMSEAKDVPLVGRCCALAGSERHDCFHHAGGVAEGEGAWPHALPVTSPPEYDSVTVCALHATANARLYDTLLWEFSRRYPSASDSHLIALANEFITGLTTCCLVEEEHGACLATLREDFKHKLTEASHKSQNLCKALKSLGKEKFEDRIIVRFTQRAPQAPFELIQKLAHRFEVLAEKCCELGHSDRCLVEERYTVDDELCLEQSFVATCPRLSSCCSLSGSSRAQCLETVPVLETSDKASPATPTLPISEQCTLWAGKPVEFHKRVVWQISHRYPTTGVAQVEALAHHYLEHLTICCASEDKDTCIATEVAEFKSEVEKVHTKSDWWCRMSDLLGTDRFNLLLIVTYSQRVPQATFEQVEEISHHFALITRKCCSHRKNGSCFLEERYALHDAICRDEAWLSGLAEVSRCCAMDGRARILCFDELSSHLNASVEERPELCSTSLCSKYHDLGFEFKQRVAYGFGQRFPKAAMGQMRDLISKYLAMVQRCCDAMSDFKMDVEEVELRAHRLCLDAHQLGEEKLADRIMIGLAQRISVASFVNISSVALHFAQSVIKCCDADHEKTCFMEQEFALEDQVCSDSEALSHIPSVSRCCELHPFDRSVCFHSLRSTQASTLASTHVAVGKDDSLPGHVEECQAFASGNHSLTDQVMFEFARRHPRASVSQVESLARLYSELARACCALTDADQESCLHTARSQARQEALKSLQRSERICNTLSAIGKEKFEDRIVIALSQKATDASFEQILEIANRMSRGLARCCEQGNNVGCLMDHRHALHEAICSTPDGSLPQSVAACCNTSNTSTTTSTTTSTTTSTTTSTTTSTTSTTTAAEIRDSCFDNLQANVSRAHAPFYSNSQLCLMKLRTPHRFLERFLWEFGRRHPQAALSQVEELAEMYVKMTDSCCGKLHSKSCFTEQRHTIHMEIRHAYAEVQHICGSLHSRGEETFIQREVTLLSQKAPNASFEKVSQLARHFLSLAKKCCAPDHAAGCFLEEPYAIHDEVCRDDEVVDQVGGLATCCRMSGTSRAKCLAQLPRDLGRHGNRETPEFDELKICELRRDNPAVLMEKILYEFGRRHSDSAVSEVKNFAQKFSHSVTECCTSEKTHECFVEKRAAIEKVIKDEEAKGNLTCQRLKAQGVEHFEQLVILNFARAAKSLPMEKVVEFAHRFTRIAGQCCEHDTHCLIDESFHLHAEMCGDHGYIMAHPGVANCCKSDVSEQGTCFKIHEDVHHAEEILSKDVSPAHPTAERVCLRYRQFPEKFINLALFELVHRLPLLESSVLRRKALAYTGFTDDCCRAVDKTACFTEKLEAIKSS.

The signal sequence occupies residues 1–23; that stretch reads MGKAMLKLCITLMVLVFSGTAES. A propeptide spanning residues 24–29 is cleaved from the precursor; the sequence is KGVMRR. Albumin domains follow at residues 29-230, 231-426, 427-608, 609-811, 812-1031, 1032-1226, and 1227-1422; these read REDE…EDFK, HKLT…EFKS, EVEK…SDFK, MDVE…SQAR, QEAL…HTIH, MEIR…AIEK, and VIKD…AIKS. H36 serves as a coordination point for Cu cation. 16 cysteine pairs are disulfide-bonded: C42/C88, C87/C96, C109/C125, C124/C135, C167/C212, C211/C221, C244/C290, C289/C298, C311/C327, C326/C337, C363/C408, C407/C416, C439/C485, C484/C493, C506/C522, and C521/C532. A glycan (N-linked (GlcNAc...) asparagine) is linked at N490. A glycan (N-linked (GlcNAc...) asparagine) is linked at N541. Cystine bridges form between C556/C601, C622/C668, C667/C676, C689/C705, C704/C715, C747/C792, C791/C802, C825/C871, C870/C879, C892/C907, and C906/C947. The N-linked (GlcNAc...) asparagine glycan is linked to N652. N-linked (GlcNAc...) asparagine glycosylation occurs at N754. 2 N-linked (GlcNAc...) asparagine glycosylation sites follow: N908 and N911. The interval 910 to 936 is disordered; the sequence is SNTSTTTSTTTSTTTSTTTSTTTSTTS. 7 repeat units span residues 913 to 916, 917 to 920, 921 to 924, 925 to 928, 929 to 932, 933 to 935, and 936 to 939. Residues 913-939 are 7 X 4 AA tandem repeats of S-T-T-T; sequence STTTSTTTSTTTSTTTSTTTSTTSTTT. An N-linked (GlcNAc...) asparagine glycan is attached at N954. Intrachain disulfides connect C969–C1014, C1013–C1022, C1045–C1091, C1090–C1099, C1112–C1128, C1127–C1138, C1163–C1208, and C1207–C1216. The N-linked (GlcNAc...) asparagine glycan is linked to N1070. N-linked (GlcNAc...) asparagine glycosylation occurs at N1236. Cystine bridges form between C1239–C1285, C1284–C1291, C1304–C1320, C1319–C1330, C1359–C1404, and C1403–C1412.

Belongs to the ALB/AFP/VDB family. In terms of tissue distribution, plasma.

It localises to the secreted. Functionally, serum albumin, the main protein of plasma, has a good binding capacity for water, Ca(2+), Na(+), K(+), fatty acids, hormones, bilirubin and drugs. Its main function is the regulation of the colloidal osmotic pressure of blood. The chain is Serum albumin SDS-1 (SDS-1) from Petromyzon marinus (Sea lamprey).